Reading from the N-terminus, the 182-residue chain is Ribosome maturation factor RimM (182 aa).

Positions 103–182 constitute a PRC barrel domain; that stretch reads EDDYYWKDLM…RVEVDWDPGF (80 aa).

This sequence belongs to the RimM family. In terms of assembly, binds ribosomal protein uS19.

Its subcellular location is the cytoplasm. Functionally, an accessory protein needed during the final step in the assembly of 30S ribosomal subunit, possibly for assembly of the head region. Essential for efficient processing of 16S rRNA. May be needed both before and after RbfA during the maturation of 16S rRNA. It has affinity for free ribosomal 30S subunits but not for 70S ribosomes. The chain is Ribosome maturation factor RimM from Yersinia pestis bv. Antiqua (strain Antiqua).